Here is a 134-residue protein sequence, read N- to C-terminus: Interferon-induced transmembrane protein 5 (134 aa).

Positions 1-20 (MDTSYPREDPRAPSSRKADA) are enriched in basic and acidic residues. The disordered stretch occupies residues 1-31 (MDTSYPREDPRAPSSRKADAAAHTALSMGTP). At 1 to 39 (MDTSYPREDPRAPSSRKADAAAHTALSMGTPGPTPRDHM) the chain is on the extracellular side. A helical membrane pass occupies residues 40–60 (LWSVFSTMYLNLCCLGFLALV). S-palmitoyl cysteine attachment occurs at residues Cys-52, Cys-53, and Cys-86. Topologically, residues 61 to 88 (HSVKARDQKMAGNLEAARQYGSKAKCYN) are cytoplasmic. A helical transmembrane segment spans residues 89–109 (ILAAMWTLVPPLLLLGLVVTG). The Extracellular portion of the chain corresponds to 110-134 (ALHLSKLAKDSAAFFSTKFDEEDYN).

It belongs to the CD225/Dispanin family. Interacts with FKBP11. In terms of processing, palmitoylated. As to expression, detected in embryonic bone (at protein level). Highly expressed in osteoblasts of adults and embryos. Expressed in primitive hemopoietic cells.

The protein localises to the cell membrane. Functionally, required for normal bone mineralization. This is Interferon-induced transmembrane protein 5 (Ifitm5) from Mus musculus (Mouse).